A 179-amino-acid chain; its full sequence is Large ribosomal subunit protein uL6 (179 aa).

It belongs to the universal ribosomal protein uL6 family. As to quaternary structure, part of the 50S ribosomal subunit.

Its function is as follows. This protein binds to the 23S rRNA, and is important in its secondary structure. It is located near the subunit interface in the base of the L7/L12 stalk, and near the tRNA binding site of the peptidyltransferase center. This is Large ribosomal subunit protein uL6 from Nocardioides sp. (strain ATCC BAA-499 / JS614).